The primary structure comprises 310 residues: Methionyl-tRNA formyltransferase (310 aa).

(6S)-5,6,7,8-tetrahydrofolate is bound at residue 109-112 (SLLP).

The protein belongs to the Fmt family.

The enzyme catalyses L-methionyl-tRNA(fMet) + (6R)-10-formyltetrahydrofolate = N-formyl-L-methionyl-tRNA(fMet) + (6S)-5,6,7,8-tetrahydrofolate + H(+). Its function is as follows. Attaches a formyl group to the free amino group of methionyl-tRNA(fMet). The formyl group appears to play a dual role in the initiator identity of N-formylmethionyl-tRNA by promoting its recognition by IF2 and preventing the misappropriation of this tRNA by the elongation apparatus. The protein is Methionyl-tRNA formyltransferase of Pseudomonas putida (strain GB-1).